An 89-amino-acid chain; its full sequence is Small ribosomal subunit protein uS15 (89 aa).

Belongs to the universal ribosomal protein uS15 family. As to quaternary structure, part of the 30S ribosomal subunit. Forms a bridge to the 50S subunit in the 70S ribosome, contacting the 23S rRNA.

Functionally, one of the primary rRNA binding proteins, it binds directly to 16S rRNA where it helps nucleate assembly of the platform of the 30S subunit by binding and bridging several RNA helices of the 16S rRNA. In terms of biological role, forms an intersubunit bridge (bridge B4) with the 23S rRNA of the 50S subunit in the ribosome. The sequence is that of Small ribosomal subunit protein uS15 from Aliivibrio fischeri (strain ATCC 700601 / ES114) (Vibrio fischeri).